Consider the following 213-residue polypeptide: 3-demethoxyubiquinol 3-hydroxylase (213 aa).

Positions 62, 92, 95, 144, 176, and 179 each coordinate Fe cation.

It belongs to the COQ7 family. Requires Fe cation as cofactor.

It is found in the cell membrane. It carries out the reaction a 5-methoxy-2-methyl-3-(all-trans-polyprenyl)benzene-1,4-diol + AH2 + O2 = a 3-demethylubiquinol + A + H2O. It functions in the pathway cofactor biosynthesis; ubiquinone biosynthesis. Its function is as follows. Catalyzes the hydroxylation of 2-nonaprenyl-3-methyl-6-methoxy-1,4-benzoquinol during ubiquinone biosynthesis. The chain is 3-demethoxyubiquinol 3-hydroxylase from Legionella pneumophila (strain Corby).